Here is a 251-residue protein sequence, read N- to C-terminus: MIPKEQKGPVMAAMGDLTEPVPTLDLGKKLSVPQDLMMEELSLRNNRGSLLFQKRQRRVQKFTFELAASQRAMLAGSARRKVTGTAESGTVANANGPEGPNYRSELHIFPASPGASLGGPEGAHPAAAPAGCVPSPSALAPGYAEPLKGVPPEKFNHTAISKGYRCPWQEFVSYRDYQSDGRSHTPSPNDYRNFNKTPVPFGGPLVGGTFPRPGTPFIPEPLSGLELLRLRPSFNRVAQGWVRNLPESEEL.

Serine 31 carries the phosphoserine modification. Positions 50–67 (LLFQKRQRRVQKFTFELA) are binding to ACTN2, PPP3CA and TCAP. A binding to FLNC region spans residues 67–110 (AASQRAMLAGSARRKVTGTAESGTVANANGPEGPNYRSELHIFP). Residues 79–102 (RRKVTGTAESGTVANANGPEGPNY) are disordered. The interval 186–207 (PSPNDYRNFNKTPVPFGGPLVG) is binding to ACTN2.

The protein belongs to the myozenin family. In terms of assembly, interacts with ACTN2, LDB3, FLNC, PPP3CA and TCAP. As to expression, expressed specifically in skeletal muscle. Not detected in heart.

Its subcellular location is the cytoplasm. It localises to the myofibril. It is found in the sarcomere. The protein resides in the z line. Functionally, myozenins may serve as intracellular binding proteins involved in linking Z line proteins such as alpha-actinin, gamma-filamin, TCAP/telethonin, LDB3/ZASP and localizing calcineurin signaling to the sarcomere. Plays an important role in the modulation of calcineurin signaling. May play a role in myofibrillogenesis. The chain is Myozenin-3 from Homo sapiens (Human).